The chain runs to 357 residues: Chorismate synthase (357 aa).

The span at 38 to 49 (EKDIQPDLDRRK) shows a compositional bias: basic and acidic residues. Residues 38–60 (EKDIQPDLDRRKPGTSRYTTPRR) are disordered. Positions 48 and 54 each coordinate NADP(+). FMN is bound by residues 125–127 (RSS), 243–244 (NA), Gly-283, 298–302 (KPTSS), and Arg-324.

This sequence belongs to the chorismate synthase family. As to quaternary structure, homotetramer. FMNH2 is required as a cofactor.

It carries out the reaction 5-O-(1-carboxyvinyl)-3-phosphoshikimate = chorismate + phosphate. It functions in the pathway metabolic intermediate biosynthesis; chorismate biosynthesis; chorismate from D-erythrose 4-phosphate and phosphoenolpyruvate: step 7/7. In terms of biological role, catalyzes the anti-1,4-elimination of the C-3 phosphate and the C-6 proR hydrogen from 5-enolpyruvylshikimate-3-phosphate (EPSP) to yield chorismate, which is the branch point compound that serves as the starting substrate for the three terminal pathways of aromatic amino acid biosynthesis. This reaction introduces a second double bond into the aromatic ring system. This chain is Chorismate synthase, found in Haemophilus influenzae (strain PittEE).